The sequence spans 89 residues: Small ribosomal subunit protein uS15 (89 aa).

Belongs to the universal ribosomal protein uS15 family. As to quaternary structure, part of the 30S ribosomal subunit. Forms a bridge to the 50S subunit in the 70S ribosome, contacting the 23S rRNA.

In terms of biological role, one of the primary rRNA binding proteins, it binds directly to 16S rRNA where it helps nucleate assembly of the platform of the 30S subunit by binding and bridging several RNA helices of the 16S rRNA. Functionally, forms an intersubunit bridge (bridge B4) with the 23S rRNA of the 50S subunit in the ribosome. This is Small ribosomal subunit protein uS15 from Herminiimonas arsenicoxydans.